The chain runs to 118 residues: Small ribosomal subunit protein uS13 (118 aa).

The tract at residues 94–118 is disordered; the sequence is GLPVRGQRTKTNARTRKGPRKPIKK.

Belongs to the universal ribosomal protein uS13 family. In terms of assembly, part of the 30S ribosomal subunit. Forms a loose heterodimer with protein S19. Forms two bridges to the 50S subunit in the 70S ribosome.

In terms of biological role, located at the top of the head of the 30S subunit, it contacts several helices of the 16S rRNA. In the 70S ribosome it contacts the 23S rRNA (bridge B1a) and protein L5 of the 50S subunit (bridge B1b), connecting the 2 subunits; these bridges are implicated in subunit movement. Contacts the tRNAs in the A and P-sites. The protein is Small ribosomal subunit protein uS13 of Klebsiella pneumoniae (strain 342).